Reading from the N-terminus, the 663-residue chain is Probable methylenetetrahydrofolate reductase (NADPH) (663 aa).

Glu76 acts as the Proton donor/acceptor in catalysis. Residues 76–81 (EFFPPR) and 107–108 (TW) contribute to the NAD(+) site. Position 107 is a phosphothreonine (Thr107). FAD is bound by residues 107-108 (TW), His141, 171-173 (RGD), 187-188 (RA), Tyr210, 214-217 (HPQA), Asp223, and Lys230. Asp173 provides a ligand contact to substrate. Residues Gln241, Tyr334, and Arg338 each contribute to the substrate site. Position 408 is a phosphoserine (Ser408). Thr465 carries the phosphothreonine modification. Residues 477-480 (QPET), 497-501 (TVNSQ), Thr578, and Thr591 contribute to the S-adenosyl-L-methionine site.

It belongs to the methylenetetrahydrofolate reductase family. The cofactor is FAD.

The catalysed reaction is (6S)-5-methyl-5,6,7,8-tetrahydrofolate + NADP(+) = (6R)-5,10-methylene-5,6,7,8-tetrahydrofolate + NADPH + H(+). Its pathway is one-carbon metabolism; tetrahydrofolate interconversion. The sequence is that of Probable methylenetetrahydrofolate reductase (NADPH) from Caenorhabditis elegans.